The primary structure comprises 541 residues: DNA polymerase epsilon subunit B (541 aa).

Belongs to the DNA polymerase epsilon subunit B family. Heterotetramer. Consists of four subunits: POL2, DPB2, DPB3 and DPB4.

It localises to the nucleus. As accessory component of the DNA polymerase epsilon (DNA polymerase II) participates in chromosomal DNA replication. This is DNA polymerase epsilon subunit B (DPB2) from Cryptococcus neoformans var. neoformans serotype D (strain B-3501A) (Filobasidiella neoformans).